The sequence spans 103 residues: Small ribosomal subunit protein uS10 (103 aa).

Belongs to the universal ribosomal protein uS10 family. In terms of assembly, part of the 30S ribosomal subunit.

Functionally, involved in the binding of tRNA to the ribosomes. In Chromobacterium violaceum (strain ATCC 12472 / DSM 30191 / JCM 1249 / CCUG 213 / NBRC 12614 / NCIMB 9131 / NCTC 9757 / MK), this protein is Small ribosomal subunit protein uS10.